Consider the following 331-residue polypeptide: Taste receptor type 2 member 38 (331 aa).

The Extracellular portion of the chain corresponds to 1–17 (MLTLTPVLTVSYEAKIS). A helical membrane pass occupies residues 18-38 (FLFLSVVEFAVGIMANAFIVL). Residues 39 to 54 (VNFWDMVKKQPLNNCD) lie on the Cytoplasmic side of the membrane. Residues 55–75 (IALLCLSITRLFLQGLLLLDA) traverse the membrane as a helical segment. Residues 76-94 (IQLACFQQMKDPLSHNYQA) are Extracellular-facing. Residues 95 to 115 (ILTLWMSANQVSLWLAACLSL) traverse the membrane as a helical segment. Over 116 to 142 (LYCAKIVRFSHTFPLHLASWVSRRFLQ) the chain is Cytoplasmic. The chain crosses the membrane as a helical span at residues 143–163 (MLLVALLFSGVCTALCLWDFF). Over 164 to 198 (SRSHTVVTSMLHMNNTEFNLQIEKLNFFYSFVFCN) the chain is Extracellular. N-linked (GlcNAc...) asparagine glycosylation occurs at Asn-177. The chain crosses the membrane as a helical span at residues 199–219 (VGSVPPSLVFLISSGVLVISL). Residues 220 to 243 (GNHMRTMKSQTRGSRDPSLEAHVR) are Cytoplasmic-facing. A helical transmembrane segment spans residues 244–264 (AIIFLVSFLCFYVVSFCAALI). Over 265–276 (SIPLLVLWHNKG) the chain is Extracellular. Residues 277 to 297 (GVMVCIGMMAACPSGHAAILI) traverse the membrane as a helical segment. Topologically, residues 298 to 331 (SGNAKLKKVIVTILFWFQSRQKVRRVHKVLPRIL) are cytoplasmic.

This sequence belongs to the G-protein coupled receptor T2R family. Expressed in tongue, stomach and duodenum.

The protein resides in the membrane. Its function is as follows. Putative taste receptor which may play a role in the perception of bitterness. The sequence is that of Taste receptor type 2 member 38 (Tas2r38) from Rattus norvegicus (Rat).